The chain runs to 111 residues: 2Fe-2S ferredoxin (111 aa).

The region spanning 1–104 (MPKIFFLPHK…DIEVQIPLYN (104 aa)) is the 2Fe-2S ferredoxin-type domain. The [2Fe-2S] cluster site is built by C42, C48, C51, and C87.

The protein belongs to the adrenodoxin/putidaredoxin family. It depends on [2Fe-2S] cluster as a cofactor.

In terms of biological role, ferredoxin are iron-sulfur proteins that transfer electrons in a wide variety of metabolic reactions. This is 2Fe-2S ferredoxin (fdx) from Buchnera aphidicola subsp. Schizaphis graminum (strain Sg).